The sequence spans 989 residues: Zinc finger SWIM domain-containing protein 4 (989 aa).

Residues 1 to 32 form a disordered region; the sequence is MEPPAAKRSRGCPAGPEERDAGAGAARGRGRP. An SWIM-type zinc finger spans residues 139 to 176; the sequence is YHVSISFDRCKITSVSCGCDNRDLFYCAHVVALSLYRI.

In Homo sapiens (Human), this protein is Zinc finger SWIM domain-containing protein 4 (ZSWIM4).